We begin with the raw amino-acid sequence, 682 residues long: Polycomb protein suz12-B (682 aa).

The interval 326 to 355 is disordered; sequence DPSDPSTAPVAKPLSTRNSDTSTTESRIST. The segment covering 340 to 354 has biased composition (polar residues); that stretch reads STRNSDTSTTESRIS. The C2H2-type zinc-finger motif lies at 408–431; sequence LHCPWCTLNCRKLYSLLKHLKLSH. A VEFS-box region spans residues 523–599; sequence RLYFHSDSCM…NQMSQASMLF (77 aa).

This sequence belongs to the VEFS (VRN2-EMF2-FIS2-SU(Z)12) family. In terms of assembly, component of the prc2/eed-ezh2 complex.

The protein localises to the nucleus. Its function is as follows. Polycomb group (PcG) protein. Component of the prc2/eed-ezh2 complex, which methylates 'Lys-9' and 'Lys-27' of histone H3, leading to transcriptional repression of the affected target gene. This Danio rerio (Zebrafish) protein is Polycomb protein suz12-B (suz12b).